A 467-amino-acid chain; its full sequence is Protein PHOSPHATE STARVATION RESPONSE 3 (467 aa).

The interval 227–266 (MSLPVSSCSDQEDLQDARSPAKVQLSSSRSSSGTASCNKP) is disordered. Residues 262-322 (SCNKPRLRWT…HLQKYRLAKY (61 aa)) form the HTH myb-type domain. Positions 293 to 318 (PKGVLKLMKVEGLTIYHIKSHLQKYR) form a DNA-binding region, H-T-H motif. A compositionally biased stretch (basic and acidic residues) spans 327–337 (KEDKKQEEKKT). Disordered regions lie at residues 327–353 (KEDK…KSAQ) and 400–467 (RESI…VHDE). Over residues 402-412 (SISSMTSTTEG) the composition is skewed to polar residues. 2 stretches are compositionally biased toward basic and acidic residues: residues 419–428 (PMEKTEDKAE) and 438–467 (RITD…VHDE).

In terms of tissue distribution, expressed in the root cap and in the exodermis of the root, in the root tip of lateral roots, in the mesophyll cells of the leaf, in pollen, vascular cylinder of the anther and the veins of the lemma, palea and pistils, and in the xylem and phloem regions of large vascular bundles, small vascular bundles and diffuse vascular bundles in node I.

Its subcellular location is the nucleus. Transcription factor involved in phosphate starvation signaling. Binds to P1BS, an imperfect palindromic sequence 5'-GNATATNC-3', to promote the expression of inorganic phosphate (Pi) starvation-responsive genes. Functionally redundant with PHR1 and PHR2 in regulating Pi starvation response and Pi homeostasis. The sequence is that of Protein PHOSPHATE STARVATION RESPONSE 3 from Oryza sativa subsp. japonica (Rice).